The sequence spans 179 residues: ADP-ribosylation factor-like protein 5A (179 aa).

Gly2 is lipidated: N-myristoyl glycine. Residues 23–30 (GLDNAGKT), 66–70 (DIGGQ), 125–128 (NKQD), and Ala159 each bind GTP.

It belongs to the small GTPase superfamily. Arf family.

Its function is as follows. Lacks ADP-ribosylation enhancing activity. The polypeptide is ADP-ribosylation factor-like protein 5A (ARL5A) (Bos taurus (Bovine)).